Here is a 336-residue protein sequence, read N- to C-terminus: Anthranilate phosphoribosyltransferase (336 aa).

5-phospho-alpha-D-ribose 1-diphosphate is bound by residues Gly81, 84–85 (GD), Ser89, 91–94 (NIST), 109–117 (KHGNRGLSS), and Ala121. Anthranilate is bound at residue Gly81. Mg(2+) is bound at residue Ser93. Asn112 is an anthranilate binding site. Arg167 provides a ligand contact to anthranilate. Mg(2+) is bound by residues Asp225 and Glu226.

It belongs to the anthranilate phosphoribosyltransferase family. In terms of assembly, homodimer. The cofactor is Mg(2+).

The enzyme catalyses N-(5-phospho-beta-D-ribosyl)anthranilate + diphosphate = 5-phospho-alpha-D-ribose 1-diphosphate + anthranilate. The protein operates within amino-acid biosynthesis; L-tryptophan biosynthesis; L-tryptophan from chorismate: step 2/5. In terms of biological role, catalyzes the transfer of the phosphoribosyl group of 5-phosphorylribose-1-pyrophosphate (PRPP) to anthranilate to yield N-(5'-phosphoribosyl)-anthranilate (PRA). The protein is Anthranilate phosphoribosyltransferase of Mesorhizobium japonicum (strain LMG 29417 / CECT 9101 / MAFF 303099) (Mesorhizobium loti (strain MAFF 303099)).